The primary structure comprises 496 residues: Glycerol kinase (496 aa).

Thr12 provides a ligand contact to ADP. ATP-binding residues include Thr12, Thr13, and Ser14. Thr12 contributes to the sn-glycerol 3-phosphate binding site. ADP is bound at residue Arg16. The sn-glycerol 3-phosphate site is built by Arg82, Glu83, and Tyr134. 3 residues coordinate glycerol: Arg82, Glu83, and Tyr134. His230 bears the Phosphohistidine; by HPr mark. Sn-glycerol 3-phosphate is bound at residue Asp244. Asp244 and Gln245 together coordinate glycerol. ADP contacts are provided by Thr266 and Gly309. ATP-binding residues include Thr266, Gly309, Gln313, and Gly410. ADP-binding residues include Gly410 and Asn414.

It belongs to the FGGY kinase family. Homotetramer and homodimer (in equilibrium). In terms of processing, the phosphoenolpyruvate-dependent sugar phosphotransferase system (PTS), including enzyme I, and histidine-containing protein (HPr) are required for the phosphorylation, which leads to the activation of the enzyme.

The catalysed reaction is glycerol + ATP = sn-glycerol 3-phosphate + ADP + H(+). Its pathway is polyol metabolism; glycerol degradation via glycerol kinase pathway; sn-glycerol 3-phosphate from glycerol: step 1/1. Its activity is regulated as follows. Activated by phosphorylation and inhibited by fructose 1,6-bisphosphate (FBP). Key enzyme in the regulation of glycerol uptake and metabolism. Catalyzes the phosphorylation of glycerol to yield sn-glycerol 3-phosphate. This is Glycerol kinase from Bacillus subtilis (strain 168).